We begin with the raw amino-acid sequence, 311 residues long: tRNA dimethylallyltransferase (311 aa).

ATP is bound at residue 13–20; it reads GPTASGKT. 15-20 is a substrate binding site; the sequence is TASGKT. Interaction with substrate tRNA stretches follow at residues 38 to 41 and 166 to 170; these read DSMQ and QRVLR.

The protein belongs to the IPP transferase family. As to quaternary structure, monomer. The cofactor is Mg(2+).

The catalysed reaction is adenosine(37) in tRNA + dimethylallyl diphosphate = N(6)-dimethylallyladenosine(37) in tRNA + diphosphate. Catalyzes the transfer of a dimethylallyl group onto the adenine at position 37 in tRNAs that read codons beginning with uridine, leading to the formation of N6-(dimethylallyl)adenosine (i(6)A). The protein is tRNA dimethylallyltransferase of Staphylococcus aureus (strain bovine RF122 / ET3-1).